The following is an 866-amino-acid chain: Scm-like with four MBT domains protein 1 (866 aa).

MBT repeat units lie at residues 20–120 (LSWE…LEAP), 128–232 (SDWD…LQPP), 242–348 (AEWQ…ISPP), and 356–453 (FDWA…LSTP). The interval 34 to 42 (VPYGSFKHV) is antigenic epitope. The interval 641-777 (KKKNKRIGRP…DDENKPPSPK (137 aa)) is disordered. The segment covering 663–682 (KASKRRKRRKNVFVHKKKRS) has biased composition (basic residues). A compositionally biased stretch (polar residues) spans 683–694 (SASVDNTPAGSP). 2 stretches are compositionally biased toward acidic residues: residues 699–713 (GEDE…DDSL) and 721–730 (QQDELQEESE). Low complexity predominate over residues 737 to 749 (CSSSPTQSEISTS). Phosphoserine occurs at positions 767 and 775. One can recognise an SAM domain in the interval 796–864 (WSVADVVRFI…RIKFAFYEQF (69 aa)).

As to quaternary structure, interacts with MYOD1. Component of the SLC (SFMBT1-LSD1-CoREST) corepressor complex, which also contains KDM1A/LSD1 and RCOR1/CoREST. Interacts with KDM1A/LSD1 and RCOR1/CoREST. Interacts with L3MBTL3. Expressed in all cell lines and normal tissues tested, including the thymus.

The protein resides in the nucleus. Histone-binding protein, which is part of various corepressor complexes. Mediates the recruitment of corepressor complexes to target genes, followed by chromatin compaction and repression of transcription. Plays a role during myogenesis: required for the maintenance of undifferentiated states of myogenic progenitor cells via interaction with MYOD1. Interaction with MYOD1 leads to the recruitment of associated corepressors and silencing of MYOD1 target genes. Part of the SLC complex in germ cells, where it may play a role during spermatogenesis. This is Scm-like with four MBT domains protein 1 (SFMBT1) from Homo sapiens (Human).